Reading from the N-terminus, the 409-residue chain is NADH-ubiquinone oxidoreductase chain 4 (409 aa).

Transmembrane regions (helical) follow at residues 9–29 (LYFFFEPVLFFFFMVVFGFVA), 44–64 (SFSFILLIVMSLFILGVVLLS), 68–88 (FMLLLLSEVLVVVCVFFFVPS), 90–110 (VILMYMYFELSMFPILVMILG), 125–145 (IFYAALCSFPFLFVYFKSFFF), 160–180 (VFVLSLSFMMKFPVYFLHLWL), 194–214 (LLAGLLLKLGTAGFLRILGCL), 221–241 (VWIVLAFLGMILASFCCMFQS), 246–268 (LAAYSSITHMSFVLMALVFIIMS), 273–295 (GVILMLAHGYTSTLMFYLVGEFY), 305–325 (YMSSFFGSGMIMALLFAVVFL), 352–372 (FSFWVLFVYFFSAFYYSIYLL), and 389–409 (VGFSVPLVFMMYNIFWMSVFF).

This sequence belongs to the complex I subunit 4 family.

Its subcellular location is the mitochondrion membrane. The enzyme catalyses a ubiquinone + NADH + 5 H(+)(in) = a ubiquinol + NAD(+) + 4 H(+)(out). In terms of biological role, core subunit of the mitochondrial membrane respiratory chain NADH dehydrogenase (Complex I) that is believed to belong to the minimal assembly required for catalysis. Complex I functions in the transfer of electrons from NADH to the respiratory chain. The immediate electron acceptor for the enzyme is believed to be ubiquinone. The protein is NADH-ubiquinone oxidoreductase chain 4 (ND4) of Ascaris suum (Pig roundworm).